The primary structure comprises 3623 residues: Cubilin (3623 aa).

Positions 1–23 (MMNMSLPFLWSLLTLLIFAEVNG) are cleaved as a signal peptide. Positions 24 to 35 (EAGELELQRQKR) are cleaved as a propeptide — removed in mature form. The interval 42 to 49 (PRMATERG) is interaction with AMN. The N-linked (GlcNAc...) asparagine glycan is linked to Asn105. One can recognise an EGF-like 1 domain in the interval 132–168 (DKKVCSSNPCQNGGTCLNLHDSFFCICPPQWKGPLCS). Disulfide bonds link Cys136-Cys147, Cys141-Cys156, Cys158-Cys167, Cys174-Cys190, Cys184-Cys199, Cys201-Cys210, Cys267-Cys280, Cys274-Cys289, and Cys292-Cys303. In terms of domain architecture, EGF-like 2; calcium-binding spans 170–211 (DVNECEIYSGTPLSCQNGGTCVNTMGSYSCHCPPETYGPQCA). The region spanning 263–304 (DRDECSFQPGPCSTLVQCFNTQGSFYCGACPTGWQGNGYICE) is the EGF-like 3; calcium-binding domain. An EGF-like 4; calcium-binding domain is found at 305-348 (DINECEINNGGCSVAPPVECVNTPGSSHCQACPPGYQGDGRVCT). EGF-like domains follow at residues 349–385 (LTDI…YTGN) and 395–430 (LSNI…VNCT). 13 disulfides stabilise this stretch: Cys353/Cys366, Cys360/Cys376, Cys399/Cys409, Cys404/Cys418, Cys420/Cys429, Cys436/Cys447, Cys441/Cys456, Cys458/Cys467, Cys474/Cys500, Cys527/Cys549, Cys590/Cys616, Cys643/Cys665, and Cys708/Cys734. N-linked (GlcNAc...) asparagine glycosylation is present at Asn428. Positions 432 to 468 (NINECLSNPCLNGGTCVDGVDSFSCECTRLWTGALCQ) constitute an EGF-like 7; calcium-binding domain. CUB domains lie at 474–586 (CGES…WETQ), 590–702 (CGGI…YLTS), 708–816 (CGGN…YQVA), 816–928 (ACGD…FSAE), 932–1042 (CGEI…YEAI), 1048–1161 (CLQD…WDGS), 1165–1277 (CGGN…YRQT), 1278–1389 (CENV…WFVY), 1391–1506 (CGGE…WQAV), 1510–1619 (CGGI…FRQA), 1620–1734 (CGGH…VTAS), 1738–1850 (CGGT…FMKI), 1852–1963 (GNDN…WFAV), 1978–2091 (CGGF…FHKS), 2092–2213 (CGGY…YEAK), 2217–2334 (CGGN…YSIA), 2336–2448 (CGGR…FESS), 2452–2565 (CGGD…YTSS), 2570–2687 (CGGS…YSFT), 2689–2801 (CGGI…WNTQ), 2805–2919 (CGGI…FVSR), 2920–3035 (CGSN…YRII), 3037–3150 (CGGV…FRQT), 3157–3274 (CGGY…YTIM), 3278–3393 (CGGT…YQIA), 3395–3507 (CNRD…WTSS), and 3511–3623 (CGGT…TWDS). Residue Asn482 is glycosylated (N-linked (GlcNAc...) asparagine). N-linked (GlcNAc...) asparagine glycosylation is found at Asn711, Asn749, Asn781, and Asn857. 2 cysteine pairs are disulfide-bonded: Cys869–Cys891 and Cys932–Cys958. Asn957 is a glycosylation site (N-linked (GlcNAc...) asparagine). Residue Glu980 participates in Ca(2+) binding. N-linked (GlcNAc...) asparagine glycosylation is present at Asn984. Cys985 and Cys1005 are disulfide-bonded. Ca(2+)-binding residues include Asp988, Asp1027, Asp1029, and Leu1030. Cysteines 1048 and 1074 form a disulfide. N-linked (GlcNAc...) asparagine glycosylation occurs at Asn1092. 5 residues coordinate Ca(2+): Glu1096, Asp1105, Asp1146, Ile1148, and Asp1149. Cysteines 1165 and 1191 form a disulfide. Residue Asn1168 is glycosylated (N-linked (GlcNAc...) asparagine). Residue Glu1213 coordinates Ca(2+). N-linked (GlcNAc...) asparagine glycosylation occurs at Asn1217. Cys1218 and Cys1240 are oxidised to a cystine. The Ca(2+) site is built by Asp1221, Asp1262, Gly1264, and Gln1265. A disulfide bond links Cys1278 and Cys1306. Asn1285, Asn1307, and Asn1319 each carry an N-linked (GlcNAc...) asparagine glycan. Glu1328 lines the Ca(2+) pocket. The N-linked (GlcNAc...) asparagine glycan is linked to Asn1332. A disulfide bridge links Cys1333 with Cys1351. 3 residues coordinate Ca(2+): Asp1336, Asp1373, and Val1375. Intrachain disulfides connect Cys1391/Cys1417 and Cys1444/Cys1466. A glycan (N-linked (GlcNAc...) asparagine) is linked at Asn1500. A disulfide bridge links Cys1510 with Cys1536. Residue Asn1551 is glycosylated (N-linked (GlcNAc...) asparagine). Disulfide bonds link Cys1563–Cys1581, Cys1620–Cys1647, Cys1675–Cys1697, Cys1738–Cys1764, and Cys1791–Cys1812. An N-linked (GlcNAc...) asparagine glycan is attached at Asn1646. N-linked (GlcNAc...) asparagine glycans are attached at residues Asn1802, Asn1819, and Asn1885. 3 disulfides stabilise this stretch: Cys1905–Cys1927, Cys1978–Cys2006, and Cys2032–Cys2054. Residues Asn2085 and Asn2117 are each glycosylated (N-linked (GlcNAc...) asparagine). 2 disulfide bridges follow: Cys2092-Cys2118 and Cys2217-Cys2247. Residue Asn2274 is glycosylated (N-linked (GlcNAc...) asparagine). Cystine bridges form between Cys2275-Cys2297 and Cys2336-Cys2363. N-linked (GlcNAc...) asparagine glycans are attached at residues Asn2386 and Asn2400. 3 disulfides stabilise this stretch: Cys2390–Cys2411, Cys2452–Cys2478, and Cys2505–Cys2527. N-linked (GlcNAc...) asparagine glycosylation is found at Asn2531, Asn2581, Asn2592, and Asn2610. A disulfide bridge connects residues Cys2570 and Cys2599. Intrachain disulfides connect Cys2628-Cys2649, Cys2689-Cys2715, Cys2742-Cys2764, Cys2805-Cys2831, Cys2860-Cys2883, Cys2920-Cys2946, and Cys2977-Cys2999. A glycan (N-linked (GlcNAc...) asparagine) is linked at Asn2813. Asn2923 and Asn2945 each carry an N-linked (GlcNAc...) asparagine glycan. Thr3008 carries the post-translational modification Phosphothreonine. Disulfide bonds link Cys3037/Cys3064 and Cys3091/Cys3113. N-linked (GlcNAc...) asparagine glycosylation is found at Asn3042, Asn3103, Asn3125, and Asn3165. Cystine bridges form between Cys3157-Cys3185 and Cys3215-Cys3237. Asn3268, Asn3283, Asn3290, and Asn3295 each carry an N-linked (GlcNAc...) asparagine glycan. 2 cysteine pairs are disulfide-bonded: Cys3278/Cys3306 and Cys3332/Cys3354. An N-linked (GlcNAc...) asparagine glycan is attached at Asn3357. An intrachain disulfide couples Cys3395 to Cys3421. N-linked (GlcNAc...) asparagine glycosylation is found at Asn3430, Asn3457, Asn3533, and Asn3576. Cystine bridges form between Cys3448–Cys3470, Cys3511–Cys3537, and Cys3564–Cys3586.

Interacts with AMN. Component of the cubam complex composed of one CUBN trimer and one AMN chain. The cubam complex can dimerize. Interacts with LRP2 in a dual-receptor complex in a calcium-dependent manner. Found in a complex with PID1/PCLI1, LRP1 and CUBNI. Interacts with LRP1 and PID1/PCLI1. Post-translationally, the precursor is cleaved by a trans-Golgi proteinase furin, removing a propeptide. In terms of processing, N-glycosylated. As to expression, detected in kidney cortex (at protein level). Expressed in kidney proximal tubule cells, placenta, visceral yolk-sac cells and in absorptive intestinal cells. Expressed in the epithelium of intestine and kidney.

The protein localises to the apical cell membrane. It localises to the cell membrane. Its subcellular location is the membrane. It is found in the coated pit. The protein resides in the endosome. The protein localises to the lysosome membrane. Its function is as follows. Endocytic receptor which plays a role in lipoprotein, vitamin and iron metabolism by facilitating their uptake. Acts together with LRP2 to mediate endocytosis of high-density lipoproteins, GC, hemoglobin, ALB, TF and SCGB1A1. Acts together with AMN to mediate endocytosis of the CBLIF-cobalamin complex. Binds to ALB, MB, Kappa and lambda-light chains, TF, hemoglobin, GC, SCGB1A1, APOA1, high density lipoprotein, and the CBLIF-cobalamin complex. Ligand binding requires calcium. Serves as important transporter in several absorptive epithelia, including intestine, renal proximal tubules and embryonic yolk sac. May play an important role in the development of the peri-implantation embryo through internalization of APOA1 and cholesterol. Binds to LGALS3 at the maternal-fetal interface. The polypeptide is Cubilin (CUBN) (Homo sapiens (Human)).